The chain runs to 696 residues: Carotenoid dioxygenase carX (696 aa).

The segment covering 1–16 (MKFLQQNSFTQTSMSQ) has biased composition (polar residues). Residues 1–27 (MKFLQQNSFTQTSMSQPHEDVSPPLRH) form a disordered region. Fe(2+) contacts are provided by histidine 244, histidine 298, histidine 361, and histidine 642.

The protein belongs to the carotenoid oxygenase family. It depends on Fe(2+) as a cofactor.

It carries out the reaction all-trans-beta-carotene + O2 = 2 all-trans-retinal. Its pathway is carotenoid biosynthesis. Functionally, carotenoid dioxygenase; part of the car gene cluster that mediates the biosynthesis of neurosporaxanthin, a carboxylic apocarotenoid acting as an essential protective pigments and leading to orange pigmentation. CarX mediates the cleavage of beta-carotene produced by carAR into retinal, the rhodopsin's chromophore that is involved in the regulation of the carotenoid biosynthetic pathway via a negative feedback mechanism. It can also convert the synthetic compound beta-apo-8'-carotenal but not C35-apocarotenoids such as the acidic apocarotenoid neurosporaxanthin (C35), as well as its corresponding aldehyde beta-apo-4'-carotenal. The sequence is that of Carotenoid dioxygenase carX from Gibberella fujikuroi (strain CBS 195.34 / IMI 58289 / NRRL A-6831) (Bakanae and foot rot disease fungus).